Here is a 54-residue protein sequence, read N- to C-terminus: Rubredoxin-1 (54 aa).

The Rubredoxin-like domain occupies 1-52 (MKKWECVVCGFIYDEAEGLPDEGIEPGTAWNNVPEDWVCPDCGVGKDDFEMV). Fe cation is bound by residues Cys6, Cys9, Cys39, and Cys42.

It belongs to the rubredoxin family. It depends on Fe(3+) as a cofactor.

It localises to the cytoplasm. It functions in the pathway hydrocarbon metabolism; alkane degradation. In terms of biological role, involved in the hydrocarbon hydroxylating system, which transfers electrons from NADH to rubredoxin reductase and then through rubredoxin to alkane 1 monooxygenase. This Alcanivorax borkumensis (strain ATCC 700651 / DSM 11573 / NCIMB 13689 / SK2) protein is Rubredoxin-1 (rubA).